We begin with the raw amino-acid sequence, 617 residues long: Proline--tRNA ligase (617 aa).

This sequence belongs to the class-II aminoacyl-tRNA synthetase family. ProS type 1 subfamily. As to quaternary structure, homodimer.

The protein localises to the cytoplasm. The catalysed reaction is tRNA(Pro) + L-proline + ATP = L-prolyl-tRNA(Pro) + AMP + diphosphate. Functionally, catalyzes the attachment of proline to tRNA(Pro) in a two-step reaction: proline is first activated by ATP to form Pro-AMP and then transferred to the acceptor end of tRNA(Pro). As ProRS can inadvertently accommodate and process non-cognate amino acids such as alanine and cysteine, to avoid such errors it has two additional distinct editing activities against alanine. One activity is designated as 'pretransfer' editing and involves the tRNA(Pro)-independent hydrolysis of activated Ala-AMP. The other activity is designated 'posttransfer' editing and involves deacylation of mischarged Ala-tRNA(Pro). The misacylated Cys-tRNA(Pro) is not edited by ProRS. This chain is Proline--tRNA ligase, found in Streptococcus pneumoniae (strain ATCC 700669 / Spain 23F-1).